The following is a 2318-amino-acid chain: Neurogenic locus notch homolog protein 3 (2318 aa).

Positions 1–14 are enriched in basic residues; the sequence is MGLGARGRRRRRRL. A disordered region spans residues 1-20; it reads MGLGARGRRRRRRLMALPPP. The N-terminal stretch at 1 to 39 is a signal peptide; it reads MGLGARGRRRRRRLMALPPPPPPMRALPLLLLLAGLGAA. 3 EGF-like domains span residues 40–78, 79–119, and 120–157; these read APPC…ERCQ, LEDP…PDCS, and QPDP…QSCQ. At 40–1643 the chain is on the extracellular side; sequence APPCLDGSPC…PLEAPEQSVP (1604 aa). 99 cysteine pairs are disulfide-bonded: cysteine 43–cysteine 55, cysteine 49–cysteine 66, cysteine 68–cysteine 77, cysteine 83–cysteine 94, cysteine 88–cysteine 107, cysteine 109–cysteine 118, cysteine 124–cysteine 135, cysteine 129–cysteine 145, cysteine 147–cysteine 156, cysteine 163–cysteine 175, cysteine 169–cysteine 184, cysteine 186–cysteine 195, cysteine 202–cysteine 213, cysteine 207–cysteine 223, cysteine 225–cysteine 234, cysteine 241–cysteine 252, cysteine 246–cysteine 261, cysteine 263–cysteine 272, cysteine 279–cysteine 292, cysteine 286–cysteine 301, cysteine 303–cysteine 312, cysteine 319–cysteine 330, cysteine 324–cysteine 339, cysteine 341–cysteine 350, cysteine 356–cysteine 367, cysteine 361–cysteine 378, cysteine 380–cysteine 389, cysteine 396–cysteine 409, cysteine 403–cysteine 418, cysteine 420–cysteine 429, cysteine 436–cysteine 447, cysteine 441–cysteine 456, cysteine 458–cysteine 467, cysteine 474–cysteine 485, cysteine 479–cysteine 494, cysteine 496–cysteine 505, cysteine 512–cysteine 523, cysteine 517–cysteine 532, cysteine 534–cysteine 543, cysteine 550–cysteine 560, cysteine 555–cysteine 569, cysteine 571–cysteine 580, cysteine 587–cysteine 598, cysteine 592–cysteine 607, cysteine 609–cysteine 618, cysteine 625–cysteine 635, cysteine 630–cysteine 644, cysteine 646–cysteine 655, cysteine 662–cysteine 673, cysteine 667–cysteine 682, cysteine 684–cysteine 693, cysteine 700–cysteine 710, cysteine 705–cysteine 719, cysteine 721–cysteine 730, cysteine 739–cysteine 750, cysteine 744–cysteine 759, cysteine 761–cysteine 770, cysteine 776–cysteine 787, cysteine 781–cysteine 797, cysteine 799–cysteine 808, cysteine 815–cysteine 827, cysteine 821–cysteine 836, cysteine 838–cysteine 847, cysteine 854–cysteine 865, cysteine 859–cysteine 874, cysteine 876–cysteine 885, cysteine 892–cysteine 902, cysteine 897–cysteine 911, cysteine 913–cysteine 922, cysteine 929–cysteine 940, cysteine 934–cysteine 949, cysteine 951–cysteine 960, cysteine 967–cysteine 978, cysteine 972–cysteine 987, cysteine 989–cysteine 998, cysteine 1005–cysteine 1016, cysteine 1010–cysteine 1023, cysteine 1025–cysteine 1034, cysteine 1041–cysteine 1062, cysteine 1056–cysteine 1071, cysteine 1073–cysteine 1082, cysteine 1089–cysteine 1100, cysteine 1094–cysteine 1109, cysteine 1111–cysteine 1120, cysteine 1127–cysteine 1138, cysteine 1132–cysteine 1147, cysteine 1149–cysteine 1158, cysteine 1165–cysteine 1183, cysteine 1177–cysteine 1192, cysteine 1194–cysteine 1203, cysteine 1210–cysteine 1223, cysteine 1215–cysteine 1233, cysteine 1235–cysteine 1244, cysteine 1251–cysteine 1262, cysteine 1256–cysteine 1276, cysteine 1278–cysteine 1287, cysteine 1294–cysteine 1305, cysteine 1299–cysteine 1314, and cysteine 1316–cysteine 1325. The 38-residue stretch at 159-196 folds into the EGF-like 4; calcium-binding domain; it reads DIDECRSGTTCRHGGTCLNTPGSFRCQCPLGYTGLLCE. The EGF-like 5 domain occupies 198–235; the sequence is PVVPCAPSPCRNGGTCRQSSDVTYDCACLPGFEGQNCE. The EGF-like 6; calcium-binding domain maps to 237–273; sequence NVDDCPGHRCLNGGTCVDGVNTYNCQCPPEWTGQFCT. Residues 275-313 form the EGF-like 7 domain; it reads DVDECQLQPNACHNGGTCFNLLGGHSCVCVNGWTGESCS. Residues 315-351 form the EGF-like 8; calcium-binding domain; the sequence is NIDDCATAVCFHGATCHDRVASFYCACPMGKTGLLCH. One can recognise an EGF-like 9 domain in the interval 352–390; that stretch reads LDDACVSNPCHEDAICDTNPVSGRAICTCPPGFTGGACD. Residues 392–430 enclose the EGF-like 10; calcium-binding domain; sequence DVDECSIGANPCEHLGRCVNTQGSFLCQCGRGYTGPRCE. One can recognise an EGF-like 11; calcium-binding domain in the interval 432–468; sequence DVNECLSGPCRNQATCLDRIGQFTCICMAGFTGTYCE. Residues 470-506 enclose the EGF-like 12; calcium-binding domain; the sequence is DIDECQSSPCVNGGVCKDRVNGFSCTCPSGFSGSMCQ. The EGF-like 13; calcium-binding domain maps to 508–544; the sequence is DVDECASTPCRNGAKCVDQPDGYECRCAEGFEGTLCE. An EGF-like 14; calcium-binding domain is found at 546–581; that stretch reads NVDDCSPDPCHHGRCVDGIASFSCACAPGYTGIRCE. An EGF-like 15; calcium-binding domain is found at 583–619; sequence QVDECRSQPCRYGGKCLDLVDKYLCRCPPGTTGVNCE. An EGF-like 16; calcium-binding domain is found at 621–656; it reads NIDDCASNPCTFGVCRDGINRYDCVCQPGFTGPLCN. Residues 658–694 enclose the EGF-like 17; calcium-binding domain; the sequence is EINECASSPCGEGGSCVDGENGFHCLCPPGSLPPLCL. 3 EGF-like domains span residues 696–731, 735–771, and 772–809; these read ANHP…PRCS, APDA…HQCE, and VLSP…PRCQ. Residues 811–848 enclose the EGF-like 21; calcium-binding domain; it reads DVDECAGASPCGPHGTCTNLPGNFRCICHRGYTGPFCD. An EGF-like 22; calcium-binding domain is found at 850-886; the sequence is DIDDCDPNPCLHGGSCQDGVGSFSCSCLDGFAGPRCA. An EGF-like 23; calcium-binding domain is found at 888–923; sequence DVDECLSSPCGPGTCTDHVASFTCACPPGYGGFHCE. 5 consecutive EGF-like domains span residues 925–961, 963–999, 1001–1035, 1037–1083, and 1085–1121; these read DLPD…THCQ, EADP…SQCQ, PVDW…RLCD, QSLP…SHCE, and EVDP…DSCE. Positions 1123 to 1159 constitute an EGF-like 29; calcium-binding domain; that stretch reads NIDECASQPCQNGGSCIDLVARYLCSCPPGTLGVLCE. The 44-residue stretch at 1161–1204 folds into the EGF-like 30; calcium-binding domain; sequence NEDDCDLGPSLDSGVQCLHNGTCVDLVGGFRCNCPPGYTGLHCE. N-linked (GlcNAc...) asparagine glycosylation is present at asparagine 1180. 4 consecutive EGF-like domains span residues 1206–1245, 1247–1288, 1290–1326, and 1336–1374; these read DINE…PRCQ, ALSP…LRCE, VARS…PSCR, and TNAS…PRCE. N-linked (GlcNAc...) asparagine glycosylation occurs at asparagine 1337. 12 disulfide bridges follow: cysteine 1340–cysteine 1351, cysteine 1345–cysteine 1362, cysteine 1364–cysteine 1373, cysteine 1388–cysteine 1411, cysteine 1393–cysteine 1406, cysteine 1402–cysteine 1418, cysteine 1429–cysteine 1452, cysteine 1434–cysteine 1447, cysteine 1443–cysteine 1459, cysteine 1468–cysteine 1494, cysteine 1476–cysteine 1489, and cysteine 1485–cysteine 1501. 3 LNR repeats span residues 1388–1428, 1429–1466, and 1468–1506; these read CPRA…PWRQ, CEAL…GRDR, and CNPV…SEVP. Asparagine 1439 carries N-linked (GlcNAc...) asparagine glycosylation. A helical membrane pass occupies residues 1644–1664; the sequence is LLPLLVAGAVFLLIIFILGVM. Residues 1665-2318 are Cytoplasmic-facing; the sequence is VARRKREHST…EVTPKRQVMA (654 aa). ANK repeat units lie at residues 1839 to 1868, 1872 to 1902, 1906 to 1935, 1939 to 1968, and 1972 to 2001; these read TGET…DTNA, SGRT…DLDA, DGST…DVNA, LGKS…NKDM, and KEET…NREI. Disordered regions lie at residues 2025–2045 and 2058–2126; these read LDQP…PLLC and QSGT…PLEG. Residues 2028 to 2045 show a composition bias toward low complexity; it reads PSGPRSPSGPHGLGPLLC. Arginine 2174 bears the Omega-N-methylarginine mark. A compositionally biased stretch (low complexity) spans 2184–2193; that stretch reads SFLLPLAPGP. The disordered stretch occupies residues 2184-2318; it reads SFLLPLAPGP…EVTPKRQVMA (135 aa). Residues 2242–2261 are PEST-like; sequence HPYLTPSPESPEHWASPSPP. Low complexity predominate over residues 2262-2282; that stretch reads SLSDWSDSTPSPATATNATAS. Residues 2296–2305 are compositionally biased toward polar residues; the sequence is SLPQSQTQLG.

The protein belongs to the NOTCH family. Interacts with PSMA1. Heterodimer of a C-terminal fragment N(TM) and a N-terminal fragment N(EC) which are probably linked by disulfide bonds. Interacts with MAML1, MAML2 and MAML3 which act as transcriptional coactivators for NOTCH3. Interacts with HIF1AN. Post-translationally, synthesized in the endoplasmic reticulum as an inactive form which is proteolytically cleaved by a furin-like convertase in the trans-Golgi network before it reaches the plasma membrane to yield an active, ligand-accessible form. Cleavage results in a C-terminal fragment N(TM) and a N-terminal fragment N(EC). Following ligand binding, it is cleaved by TNF-alpha converting enzyme (TACE) to yield a membrane-associated intermediate fragment called notch extracellular truncation (NEXT). This fragment is then cleaved by presenilin dependent gamma-secretase to release a notch-derived peptide containing the intracellular domain (NICD) from the membrane. In terms of processing, phosphorylated. Hydroxylated by HIF1AN. In terms of tissue distribution, proliferating neuroepithelium.

The protein localises to the cell membrane. It is found in the nucleus. Functions as a receptor for membrane-bound ligands Jagged1, Jagged2 and Delta1 to regulate cell-fate determination. Upon ligand activation through the released notch intracellular domain (NICD) it forms a transcriptional activator complex with RBPJ/RBPSUH and activates genes of the enhancer of split locus. Affects the implementation of differentiation, proliferation and apoptotic programs. May play a role during CNS development. This is Neurogenic locus notch homolog protein 3 (Notch3) from Mus musculus (Mouse).